A 317-amino-acid polypeptide reads, in one-letter code: Ribonuclease Z (317 aa).

Zn(2+) is bound by residues His63, His65, Asp67, His68, His143, Asp213, and His273. Asp67 acts as the Proton acceptor in catalysis.

The protein belongs to the RNase Z family. In terms of assembly, homodimer. It depends on Zn(2+) as a cofactor.

The catalysed reaction is Endonucleolytic cleavage of RNA, removing extra 3' nucleotides from tRNA precursor, generating 3' termini of tRNAs. A 3'-hydroxy group is left at the tRNA terminus and a 5'-phosphoryl group is left at the trailer molecule.. In terms of biological role, zinc phosphodiesterase, which displays some tRNA 3'-processing endonuclease activity. Probably involved in tRNA maturation, by removing a 3'-trailer from precursor tRNA. This is Ribonuclease Z from Methanocaldococcus jannaschii (strain ATCC 43067 / DSM 2661 / JAL-1 / JCM 10045 / NBRC 100440) (Methanococcus jannaschii).